Here is a 314-residue protein sequence, read N- to C-terminus: Lipoyl synthase (314 aa).

Residues cysteine 60, cysteine 65, cysteine 71, cysteine 86, cysteine 90, cysteine 93, and serine 300 each coordinate [4Fe-4S] cluster. In terms of domain architecture, Radical SAM core spans 72 to 289; it reads FRKGTATFMI…RQFGLSIGFS (218 aa).

This sequence belongs to the radical SAM superfamily. Lipoyl synthase family. The cofactor is [4Fe-4S] cluster.

The protein localises to the cytoplasm. The enzyme catalyses [[Fe-S] cluster scaffold protein carrying a second [4Fe-4S](2+) cluster] + N(6)-octanoyl-L-lysyl-[protein] + 2 oxidized [2Fe-2S]-[ferredoxin] + 2 S-adenosyl-L-methionine + 4 H(+) = [[Fe-S] cluster scaffold protein] + N(6)-[(R)-dihydrolipoyl]-L-lysyl-[protein] + 4 Fe(3+) + 2 hydrogen sulfide + 2 5'-deoxyadenosine + 2 L-methionine + 2 reduced [2Fe-2S]-[ferredoxin]. The protein operates within protein modification; protein lipoylation via endogenous pathway; protein N(6)-(lipoyl)lysine from octanoyl-[acyl-carrier-protein]: step 2/2. Functionally, catalyzes the radical-mediated insertion of two sulfur atoms into the C-6 and C-8 positions of the octanoyl moiety bound to the lipoyl domains of lipoate-dependent enzymes, thereby converting the octanoylated domains into lipoylated derivatives. The polypeptide is Lipoyl synthase (Pelobacter propionicus (strain DSM 2379 / NBRC 103807 / OttBd1)).